Consider the following 316-residue polypeptide: D-alanine--D-alanine ligase (316 aa).

One can recognise an ATP-grasp domain in the interval 104 to 303 (KRVWLQHGLP…YADLCVAILA (200 aa)). ATP is bound at residue 130 to 185 (PDRLGLPLILKPPHEGSTVGITKVAGYSDMKAAYELAARFDAEVLAEQFITGRELT). Mg(2+) contacts are provided by Asp257, Glu270, and Asn272.

The protein belongs to the D-alanine--D-alanine ligase family. Mg(2+) serves as cofactor. It depends on Mn(2+) as a cofactor.

It is found in the cytoplasm. The catalysed reaction is 2 D-alanine + ATP = D-alanyl-D-alanine + ADP + phosphate + H(+). The protein operates within cell wall biogenesis; peptidoglycan biosynthesis. Cell wall formation. The sequence is that of D-alanine--D-alanine ligase from Bordetella bronchiseptica (strain ATCC BAA-588 / NCTC 13252 / RB50) (Alcaligenes bronchisepticus).